The sequence spans 430 residues: Dihydroorotase (430 aa).

The Zn(2+) site is built by His60 and His62. Residues 62 to 64 and Asn94 each bind substrate; that span reads HLR. Residues Asp152, His179, His232, and Asp305 each coordinate Zn(2+). Asp305 is an active-site residue. Substrate-binding positions include His309 and 323-324; that span reads FG.

The protein belongs to the metallo-dependent hydrolases superfamily. DHOase family. Class I DHOase subfamily. Zn(2+) serves as cofactor.

It catalyses the reaction (S)-dihydroorotate + H2O = N-carbamoyl-L-aspartate + H(+). It functions in the pathway pyrimidine metabolism; UMP biosynthesis via de novo pathway; (S)-dihydroorotate from bicarbonate: step 3/3. Its function is as follows. Catalyzes the reversible cyclization of carbamoyl aspartate to dihydroorotate. In Solibacter usitatus (strain Ellin6076), this protein is Dihydroorotase.